We begin with the raw amino-acid sequence, 425 residues long: Glutamate-1-semialdehyde 2,1-aminomutase (425 aa).

Residue Lys265 is modified to N6-(pyridoxal phosphate)lysine.

Belongs to the class-III pyridoxal-phosphate-dependent aminotransferase family. HemL subfamily. Homodimer. Pyridoxal 5'-phosphate is required as a cofactor.

The protein resides in the cytoplasm. It catalyses the reaction (S)-4-amino-5-oxopentanoate = 5-aminolevulinate. It functions in the pathway porphyrin-containing compound metabolism; protoporphyrin-IX biosynthesis; 5-aminolevulinate from L-glutamyl-tRNA(Glu): step 2/2. The polypeptide is Glutamate-1-semialdehyde 2,1-aminomutase (Desulfatibacillum aliphaticivorans).